We begin with the raw amino-acid sequence, 400 residues long: MGFITKAIPLALAAASVINGAEIMETRAGVQTLADKYIVVMNDGMTDKDFDSHRSWVNRTHRRRLIRRGAKAMGGMKHTYRFPTGLKGYSGHFDEQMINEISKRADVKYIERDARVQINAIEQQDNVPSWGLARVGSKEPGGTTYYYDGTAGEGSTAYVIDTGTDIQHEEFEGRATWGANFVDDMDMDCNGHGTHVSGTIGGKTFGVAKKSNVVAVKVLDCNGSGSNSGVIMGMEWATKDAQQKGADKAVANMSLGGAFSQASNDAAAAIAQGGVFLAVAAGNDNVDAADSSPASEPSICTVAASTEQDGKADFSNFGQVVDVYAPGDSITSAKPGGGSQVLSGTSMATPHVAGLGAYLIGLGKGGGPGLCDTIKQMAIDVIQNPGASTTSKLINNGSGM.

A signal peptide spans 1–20 (MGFITKAIPLALAAASVING). Residues 21 to 119 (AEIMETRAGV…IERDARVQIN (99 aa)) constitute a propeptide that is removed on maturation. The Inhibitor I9 domain maps to 36–118 (KYIVVMNDGM…YIERDARVQI (83 aa)). N-linked (GlcNAc...) asparagine glycosylation is present at Asn58. A Peptidase S8 domain is found at 129-400 (SWGLARVGSK…SKLINNGSGM (272 aa)). Residues Asp161 and His192 each act as charge relay system in the active site. N-linked (GlcNAc...) asparagine glycosylation is found at Asn222 and Asn252. Ser346 (charge relay system) is an active-site residue. Asn396 carries an N-linked (GlcNAc...) asparagine glycan.

The protein belongs to the peptidase S8 family.

Its subcellular location is the secreted. Its function is as follows. Secreted subtilisin-like serine protease with keratinolytic activity that contributes to pathogenicity. In Trichophyton verrucosum (Cattle ringworm fungus), this protein is Subtilisin-like protease 7 (SUB7).